We begin with the raw amino-acid sequence, 126 residues long: Arginine decarboxylase proenzyme (126 aa).

The active-site Schiff-base intermediate with substrate; via pyruvic acid is S74. The residue at position 74 (S74) is a Pyruvic acid (Ser); by autocatalysis. Catalysis depends on H79, which acts as the Proton acceptor; for processing activity. C94 (proton donor; for catalytic activity) is an active-site residue.

Belongs to the prokaryotic AdoMetDC family. Type 1 subfamily. Heterooctamer of four alpha and four beta chains arranged as a tetramer of alpha/beta heterodimers. Pyruvate is required as a cofactor. Is synthesized initially as an inactive proenzyme. Formation of the active enzyme involves a self-maturation process in which the active site pyruvoyl group is generated from an internal serine residue via an autocatalytic post-translational modification. Two non-identical subunits are generated from the proenzyme in this reaction, and the pyruvate is formed at the N-terminus of the alpha chain, which is derived from the carboxyl end of the proenzyme. The post-translation cleavage follows an unusual pathway, termed non-hydrolytic serinolysis, in which the side chain hydroxyl group of the serine supplies its oxygen atom to form the C-terminus of the beta chain, while the remainder of the serine residue undergoes an oxidative deamination to produce ammonia and the pyruvoyl group blocking the N-terminus of the alpha chain.

It carries out the reaction L-arginine + H(+) = agmatine + CO2. It participates in amine and polyamine biosynthesis; agmatine biosynthesis; agmatine from L-arginine: step 1/1. Specifically catalyzes the decarboxylation of L-arginine to agmatine. Has no S-adenosylmethionine decarboxylase (AdoMetDC) activity. This Pyrobaculum aerophilum (strain ATCC 51768 / DSM 7523 / JCM 9630 / CIP 104966 / NBRC 100827 / IM2) protein is Arginine decarboxylase proenzyme.